Consider the following 388-residue polypeptide: 5-hydroxytryptamine receptor 1B (388 aa).

Residues 1–29 (MEQPSRLCSPPASGSLTSSQTNHSTFPNP) form a disordered region. Over 1–45 (MEQPSRLCSPPASGSLTSSQTNHSTFPNPNCSAPDLEPYQDSIAL) the chain is Extracellular. The segment covering 12–29 (ASGSLTSSQTNHSTFPNP) has biased composition (polar residues). Residues Asn-22 and Asn-30 are each glycosylated (N-linked (GlcNAc...) asparagine). Residues 46-71 (PWKVLLATFLGLITLGTTLSNAFVIA) form a helical membrane-spanning segment. The Cytoplasmic portion of the chain corresponds to 72–85 (TVSRTRKLHTPANY). The helical transmembrane segment at 86-110 (LIASLAVTDLLVSILVMPISTMYTV) threads the bilayer. The Extracellular portion of the chain corresponds to 111-118 (TGRWTLGQ). Residues 119-144 (VVCDFWLSSDITCCTASILHLCVIAL) traverse the membrane as a helical segment. Cys-121 and Cys-197 are oxidised to a cystine. Ergotamine-binding residues include Asp-128 and Thr-133. The short motif at 145 to 147 (DRY) is the DRY motif; important for ligand-induced conformation changes and signaling element. The Cytoplasmic portion of the chain corresponds to 145–164 (DRYWAITDAVEYSAKRTPKR). A helical transmembrane segment spans residues 165–183 (AAGMIIMVWVFSVSISMPP). At 184–203 (LFWRQAKAEEVADCSVNTDH) the chain is on the extracellular side. An ergotamine-binding site is contributed by Val-199. A helical membrane pass occupies residues 204 to 227 (ILYTVYSTVGAFYFPTLLLIALYG). Over 228–313 (RIYVEARSRI…AARERKATRT (86 aa)) the chain is Cytoplasmic. Residues 249–282 (LTRAQLITDSPGSSSSGTSINSRAPEGPSESGSP) form a disordered region. The span at 255–270 (ITDSPGSSSSGTSINS) shows a compositional bias: low complexity. The chain crosses the membrane as a helical span at residues 314–335 (LGIILGAFIVCWLPFFIISLAL). Residues 336–345 (PICDDACWFH) are Extracellular-facing. Residues 346 to 368 (LAIFDFFNWLGYLNSLINPIIYT) form a helical membrane-spanning segment. The NPxxY motif; important for ligand-induced conformation changes and signaling motif lies at 363-367 (NPIIY). Over 369 to 388 (KSNDDFKQAFQKLMRFRRTS) the chain is Cytoplasmic.

It belongs to the G-protein coupled receptor 1 family. In terms of assembly, homodimer. Heterodimer with HTR1D. Phosphorylated. Desensitization of the receptor may be mediated by its phosphorylation. In terms of processing, palmitoylated.

The protein resides in the cell membrane. In terms of biological role, G-protein coupled receptor for 5-hydroxytryptamine (serotonin). Also functions as a receptor for ergot alkaloid derivatives, various anxiolytic and antidepressant drugs and other psychoactive substances, such as lysergic acid diethylamide (LSD). Ligand binding causes a conformation change that triggers signaling via guanine nucleotide-binding proteins (G proteins) and modulates the activity of downstream effectors, such as adenylate cyclase. HTR1B is coupled to G(i)/G(o) G alpha proteins and mediates inhibitory neurotransmission by inhibiting adenylate cyclase activity. Arrestin family members inhibit signaling via G proteins and mediate activation of alternative signaling pathways. Regulates the release of 5-hydroxytryptamine, dopamine and acetylcholine in the brain, and thereby affects neural activity, nociceptive processing, pain perception, mood and behavior. Besides, plays a role in vasoconstriction of cerebral arteries. The chain is 5-hydroxytryptamine receptor 1B (HTR1B) from Didelphis virginiana (North American opossum).